Consider the following 698-residue polypeptide: Phenylalanine aminomutase (L-beta-phenylalanine forming) (698 aa).

Tyr-80 serves as the catalytic Proton donor/acceptor. Positions Ala-175–Gly-177 form a cross-link, 5-imidazolinone (Ala-Gly). Ser-176 is subject to 2,3-didehydroalanine (Ser). (E)-cinnamate-binding residues include Asn-231, Gln-319, Arg-325, Asn-355, Lys-427, Glu-455, and Asn-458.

Belongs to the PAL/histidase family. In terms of assembly, homotetramer. In terms of processing, contains an active site 4-methylidene-imidazol-5-one (MIO), which is formed autocatalytically by cyclization and dehydration of residues Ala-Ser-Gly.

Its subcellular location is the cytoplasm. It catalyses the reaction L-phenylalanine = L-beta-phenylalanine. The enzyme catalyses L-phenylalanine = (E)-cinnamate + NH4(+). Its pathway is alkaloid biosynthesis; taxol biosynthesis. It participates in phenylpropanoid metabolism; trans-cinnamate biosynthesis; trans-cinnamate from L-phenylalanine: step 1/1. Its function is as follows. Phenylalanine aminomutase that catalyzes the rearrangement of L-phenylalanine to R-beta-phenylalanine. Catalyzes the first committed step in the biosynthesis of the side chain of the alkaloid taxol (paclitaxel), a widely-used compound with antitumor activity. Also has low phenylalanine ammonia-lyase activity. This is Phenylalanine aminomutase (L-beta-phenylalanine forming) (pam) from Taxus canadensis (Canadian yew).